Here is a 234-residue protein sequence, read N- to C-terminus: Peptidyl-tRNA hydrolase (234 aa).

Position 14 (Tyr14) interacts with tRNA. Catalysis depends on His19, which acts as the Proton acceptor. TRNA-binding residues include Phe64, Asn66, and Asn112. The disordered stretch occupies residues 187-234 (TGTKADEEKPKPAKSHIHQARNGVQPKKLPETGPMAEMLKKMFGPKKD).

It belongs to the PTH family. As to quaternary structure, monomer.

Its subcellular location is the cytoplasm. It catalyses the reaction an N-acyl-L-alpha-aminoacyl-tRNA + H2O = an N-acyl-L-amino acid + a tRNA + H(+). Hydrolyzes ribosome-free peptidyl-tRNAs (with 1 or more amino acids incorporated), which drop off the ribosome during protein synthesis, or as a result of ribosome stalling. Its function is as follows. Catalyzes the release of premature peptidyl moieties from peptidyl-tRNA molecules trapped in stalled 50S ribosomal subunits, and thus maintains levels of free tRNAs and 50S ribosomes. This Allorhizobium ampelinum (strain ATCC BAA-846 / DSM 112012 / S4) (Agrobacterium vitis (strain S4)) protein is Peptidyl-tRNA hydrolase.